Reading from the N-terminus, the 215-residue chain is MERNKLARQIIDTCLEMTRLGLNQGTAGNVSVRYQDGMLITPTGIPYEKLTESHIVFIDGNGKHEEGKLPSSEWRFHMAAYQSRPDANAVVHNHAVHCTAVSILNRPIPAIHYMIAAAGGNSIPCAPYATFGTRELSEHVALALKNRKATLLQHHGLIACEVNLEKALWLAHEVEVLAQLYLTTLAITDPVPVLSDEEIAVVLEKFKTYGLRIEE.

Substrate-binding positions include 28-29 (GN), 43-44 (TG), and 71-72 (SS). Glu-73 serves as the catalytic Proton donor/acceptor. The Zn(2+) site is built by Glu-73, His-92, His-94, and His-155.

This sequence belongs to the aldolase class II family. AraD/FucA subfamily. Homotetramer. It depends on Zn(2+) as a cofactor.

It carries out the reaction L-fuculose 1-phosphate = (S)-lactaldehyde + dihydroxyacetone phosphate. The protein operates within carbohydrate degradation; L-fucose degradation; L-lactaldehyde and glycerone phosphate from L-fucose: step 3/3. Its function is as follows. Involved in the degradation of L-fucose and D-arabinose. Catalyzes the reversible cleavage of L-fuculose 1-phosphate (Fuc1P) to yield dihydroxyacetone phosphate (DHAP) and L-lactaldehyde. This Escherichia coli O157:H7 protein is L-fuculose phosphate aldolase.